The chain runs to 471 residues: Probable ribonuclease FAU-1 (471 aa).

The S1 motif domain occupies 93-139 (GAVFDAAVDHTVGGGAILDLGDDREAYLPFGAVDDHVTDGDTLRVAI).

Belongs to the FAU-1 family.

Its function is as follows. Probable RNase involved in rRNA stability through maturation and/or degradation of precursor rRNAs. Binds to RNA in loop regions with AU-rich sequences. The protein is Probable ribonuclease FAU-1 of Halobacterium salinarum (strain ATCC 29341 / DSM 671 / R1).